A 281-amino-acid polypeptide reads, in one-letter code: Small ribosomal subunit protein uS3 (281 aa).

The KH type-2 domain maps to 38–106 (IRRLLSTGLE…QVQLNILEVK (69 aa)). Residues 218-281 (APAGAERARR…VTHEPQIAES (64 aa)) form a disordered region. Positions 238 to 252 (SGAAGTTVTGTDAGR) are enriched in low complexity.

This sequence belongs to the universal ribosomal protein uS3 family. In terms of assembly, part of the 30S ribosomal subunit. Forms a tight complex with proteins S10 and S14.

Binds the lower part of the 30S subunit head. Binds mRNA in the 70S ribosome, positioning it for translation. In Mycobacterium leprae (strain TN), this protein is Small ribosomal subunit protein uS3.